Consider the following 166-residue polypeptide: Small ribosomal subunit protein eS10 (166 aa).

Residues 95–166 (RRQTRPETAR…FGRGRGQQPQ (72 aa)) form a disordered region. Basic and acidic residues predominate over residues 98-129 (TRPETARPRPKGLEGERPARLARGEGDRDAYR). A compositionally biased stretch (low complexity) spans 143-154 (AGAGAATEFQFR). Over residues 155 to 166 (GGFGRGRGQQPQ) the composition is skewed to gly residues.

This sequence belongs to the eukaryotic ribosomal protein eS10 family. Component of the small ribosomal subunit.

It localises to the cytoplasm. The protein localises to the nucleus. It is found in the nucleolus. In terms of biological role, component of the 40S ribosomal subunit. The ribosome is a large ribonucleoprotein complex responsible for the synthesis of proteins in the cell. The sequence is that of Small ribosomal subunit protein eS10 (rps10) from Ictalurus punctatus (Channel catfish).